Consider the following 150-residue polypeptide: MQIILLDKVVNLGNLGEIVKVKDGYARNFLIPSGRARRATEANKAEFEAKRAELEKAAAAKLAEAQAQGEKLGGTTVKLTQKAGVDGRLFGSVTNHDIAEELNKQGYKIAKSQVRLPSGPIKTVGDSTVSVALHTDVVVEVTVSVYGETA.

It belongs to the bacterial ribosomal protein bL9 family.

Functionally, binds to the 23S rRNA. This is Large ribosomal subunit protein bL9 from Paracidovorax citrulli (strain AAC00-1) (Acidovorax citrulli).